The sequence spans 50 residues: Large ribosomal subunit protein bL33 (50 aa).

This sequence belongs to the bacterial ribosomal protein bL33 family.

The protein is Large ribosomal subunit protein bL33 of Endomicrobium trichonymphae.